The primary structure comprises 264 residues: MKIEAVIFDWAGTTVDYGCFAPLEVFMEIFHKRGVAITAEEARKPMGLLKIDHVRALTEMPRIASEWNRVFRQLPTEADIQEMYEEFEEILFAILPRYASPINGVKEVIASLRERGIKIGSTTGYTREMMDIVAKEAALQGYKPDFLVTPDDVPAGRPYPWMCYKNAMELGVYPMNHMIKVGDTVSDMKEGRNAGMWTVGVILGSSELGLTEEEVENMDSVELREKIEVVRNRFVENGAHFTIETMQELESVMEHIEKQELIIS.

Aspartate 9 (nucleophile) is an active-site residue. Aspartate 9 and alanine 11 together coordinate Mg(2+). The active-site Schiff-base intermediate with substrate is the lysine 50. Residue aspartate 183 participates in Mg(2+) binding.

Belongs to the HAD-like hydrolase superfamily. PhnX family. In terms of assembly, homodimer. It depends on Mg(2+) as a cofactor.

It catalyses the reaction phosphonoacetaldehyde + H2O = acetaldehyde + phosphate + H(+). Its function is as follows. Involved in phosphonate degradation. This is Phosphonoacetaldehyde hydrolase (phnX) from Bacillus cereus.